The sequence spans 231 residues: GTP cyclohydrolase III (231 aa).

The protein belongs to the archaeal-type GTP cyclohydrolase family.

The enzyme catalyses GTP + 3 H2O = 2-amino-5-formylamino-6-(5-phospho-D-ribosylamino)pyrimidin-4(3H)-one + 2 phosphate + 2 H(+). Catalyzes the formation of 2-amino-5-formylamino-6-ribofuranosylamino-4(3H)-pyrimidinone ribonucleotide monophosphate and inorganic phosphate from GTP. Also has an independent pyrophosphate phosphohydrolase activity. The sequence is that of GTP cyclohydrolase III from Saccharolobus solfataricus (strain ATCC 35092 / DSM 1617 / JCM 11322 / P2) (Sulfolobus solfataricus).